A 493-amino-acid polypeptide reads, in one-letter code: Desmethylyatein synthase (493 aa).

The chain crosses the membrane as a helical span at residues 1 to 21 (METFQCLTLFLLFISTVFILK). Residue C434 participates in heme binding.

It belongs to the cytochrome P450 family. It depends on heme as a cofactor.

The protein resides in the membrane. The catalysed reaction is (-)-bursehernin + reduced [NADPH--hemoprotein reductase] + O2 = (-)-5'-demethylyatein + oxidized [NADPH--hemoprotein reductase] + H2O + H(+). The protein operates within aromatic compound metabolism; phenylpropanoid biosynthesis. Functionally, cytochrome P450 involved in the biosynthesis of etoposide, a chemotherapeutic compound of the topoisomerase inhibitor family. Catalyzes the conversion of bursehernin to demethylyatein. The polypeptide is Desmethylyatein synthase (Sinopodophyllum hexandrum (Himalayan may apple)).